We begin with the raw amino-acid sequence, 225 residues long: Putative elongation factor 1 gamma homolog (225 aa).

Positions 94 to 225 (DFKTRADILR…MCETEMQPIK (132 aa)) constitute a GST C-terminal domain.

This Saccharomyces cerevisiae (strain ATCC 204508 / S288c) (Baker's yeast) protein is Putative elongation factor 1 gamma homolog.